Consider the following 221-residue polypeptide: Transmembrane protein 267 (221 aa).

5 helical membrane passes run 28–48 (ASAGLGAFCFVADHFLTLPFI), 57–77 (LFDNTVHAIIGLWSWAIVIGL), 86–106 (VILAGFLASVIDLDHFYMAGS), 121–141 (LHCSTLIPALCFSLRLLMWAC), and 182–204 (ISYWLYVTITATLPHLCSVLMYL).

Its subcellular location is the membrane. In Danio rerio (Zebrafish), this protein is Transmembrane protein 267 (tmem267).